The chain runs to 404 residues: Tryptophan synthase beta chain (404 aa).

Lys90 bears the N6-(pyridoxal phosphate)lysine mark.

This sequence belongs to the TrpB family. In terms of assembly, tetramer of two alpha and two beta chains. Requires pyridoxal 5'-phosphate as cofactor.

It catalyses the reaction (1S,2R)-1-C-(indol-3-yl)glycerol 3-phosphate + L-serine = D-glyceraldehyde 3-phosphate + L-tryptophan + H2O. It functions in the pathway amino-acid biosynthesis; L-tryptophan biosynthesis; L-tryptophan from chorismate: step 5/5. In terms of biological role, the beta subunit is responsible for the synthesis of L-tryptophan from indole and L-serine. This is Tryptophan synthase beta chain (trpB) from Geobacillus stearothermophilus (Bacillus stearothermophilus).